The following is a 184-amino-acid chain: MITMENIVRDGHPALRETAEPVELPPTDAEKQQLADMIEFVKNSQNPELAEKYKLRPGVGLAAPQINIKKRMIAVHAEDASGKLYSYALFNPKIVSHSVEKSYLTSGEGCLSVDEAIPGYVPRYARIRVKGTTLEGENIDIRLKGFPAIVFQHEIDHLNGVMFYDHIDKENPFKEPENAIAIER.

Fe cation is bound by residues cysteine 110 and histidine 153. Glutamate 154 is a catalytic residue. Fe cation is bound at residue histidine 157.

Belongs to the polypeptide deformylase family. Requires Fe(2+) as cofactor.

It carries out the reaction N-terminal N-formyl-L-methionyl-[peptide] + H2O = N-terminal L-methionyl-[peptide] + formate. Functionally, removes the formyl group from the N-terminal Met of newly synthesized proteins. Requires at least a dipeptide for an efficient rate of reaction. N-terminal L-methionine is a prerequisite for activity but the enzyme has broad specificity at other positions. This Bacillus subtilis (strain 168) protein is Peptide deformylase 2 (defB).